The primary structure comprises 163 residues: uncharacterized protein (163 aa).

The interval 128–163 is disordered; the sequence is PKKEKIKKAKRKKKGAKRASKKQKAKSKSARKSRRV. A compositionally biased stretch (basic residues) spans 129–163; it reads KKEKIKKAKRKKKGAKRASKKQKAKSKSARKSRRV.

This is an uncharacterized protein from Sulfurisphaera tokodaii (strain DSM 16993 / JCM 10545 / NBRC 100140 / 7) (Sulfolobus tokodaii).